Reading from the N-terminus, the 306-residue chain is Ornithine carbamoyltransferase (306 aa).

Carbamoyl phosphate-binding positions include Ser51–Thr54, Gln78, Arg102, and His129–Gln132. Residues Asn160, Asp223, and Ser227–Met228 each bind L-ornithine. Carbamoyl phosphate-binding positions include Cys263–Leu264 and Arg291.

Belongs to the aspartate/ornithine carbamoyltransferase superfamily. OTCase family.

The protein resides in the cytoplasm. The catalysed reaction is carbamoyl phosphate + L-ornithine = L-citrulline + phosphate + H(+). It participates in amino-acid biosynthesis; L-arginine biosynthesis; L-arginine from L-ornithine and carbamoyl phosphate: step 1/3. In terms of biological role, reversibly catalyzes the transfer of the carbamoyl group from carbamoyl phosphate (CP) to the N(epsilon) atom of ornithine (ORN) to produce L-citrulline. This is Ornithine carbamoyltransferase from Nostoc sp. (strain PCC 7120 / SAG 25.82 / UTEX 2576).